The chain runs to 389 residues: Carbamoyl phosphate synthase small chain (389 aa).

The tract at residues 1–197 (MMSSPAKAAK…AAKDASIGDD (197 aa)) is CPSase. L-glutamine contacts are provided by Ser51, Gly249, and Gly251. The region spanning 201 to 387 (HVVCMDFGMK…QEQLNEKCGV (187 aa)) is the Glutamine amidotransferase type-1 domain. Cys276 acts as the Nucleophile in catalysis. Leu277, Gln280, Asn318, Gly320, and Phe321 together coordinate L-glutamine. Catalysis depends on residues His360 and Glu362.

It belongs to the CarA family. Composed of two chains; the small (or glutamine) chain promotes the hydrolysis of glutamine to ammonia, which is used by the large (or ammonia) chain to synthesize carbamoyl phosphate. Tetramer of heterodimers (alpha,beta)4.

The enzyme catalyses hydrogencarbonate + L-glutamine + 2 ATP + H2O = carbamoyl phosphate + L-glutamate + 2 ADP + phosphate + 2 H(+). It carries out the reaction L-glutamine + H2O = L-glutamate + NH4(+). Its pathway is amino-acid biosynthesis; L-arginine biosynthesis; carbamoyl phosphate from bicarbonate: step 1/1. The protein operates within pyrimidine metabolism; UMP biosynthesis via de novo pathway; (S)-dihydroorotate from bicarbonate: step 1/3. Its function is as follows. Small subunit of the glutamine-dependent carbamoyl phosphate synthetase (CPSase). CPSase catalyzes the formation of carbamoyl phosphate from the ammonia moiety of glutamine, carbonate, and phosphate donated by ATP, constituting the first step of 2 biosynthetic pathways, one leading to arginine and/or urea and the other to pyrimidine nucleotides. The small subunit (glutamine amidotransferase) binds and cleaves glutamine to supply the large subunit with the substrate ammonia. The protein is Carbamoyl phosphate synthase small chain of Rhodopirellula baltica (strain DSM 10527 / NCIMB 13988 / SH1).